The sequence spans 292 residues: ATP synthase gamma chain (292 aa).

This sequence belongs to the ATPase gamma chain family. As to quaternary structure, F-type ATPases have 2 components, CF(1) - the catalytic core - and CF(0) - the membrane proton channel. CF(1) has five subunits: alpha(3), beta(3), gamma(1), delta(1), epsilon(1). CF(0) has three main subunits: a, b and c.

The protein resides in the cell inner membrane. Its function is as follows. Produces ATP from ADP in the presence of a proton gradient across the membrane. The gamma chain is believed to be important in regulating ATPase activity and the flow of protons through the CF(0) complex. This is ATP synthase gamma chain from Brucella canis (strain ATCC 23365 / NCTC 10854 / RM-666).